The following is a 962-amino-acid chain: Glycine dehydrogenase (decarboxylating) (962 aa).

Position 709 is an N6-(pyridoxal phosphate)lysine (Lys709).

It belongs to the GcvP family. The glycine cleavage system is composed of four proteins: P, T, L and H. Pyridoxal 5'-phosphate is required as a cofactor.

The enzyme catalyses N(6)-[(R)-lipoyl]-L-lysyl-[glycine-cleavage complex H protein] + glycine + H(+) = N(6)-[(R)-S(8)-aminomethyldihydrolipoyl]-L-lysyl-[glycine-cleavage complex H protein] + CO2. Functionally, the glycine cleavage system catalyzes the degradation of glycine. The P protein binds the alpha-amino group of glycine through its pyridoxal phosphate cofactor; CO(2) is released and the remaining methylamine moiety is then transferred to the lipoamide cofactor of the H protein. The sequence is that of Glycine dehydrogenase (decarboxylating) from Shewanella baltica (strain OS155 / ATCC BAA-1091).